A 141-amino-acid chain; its full sequence is Large ribosomal subunit protein uL11 (141 aa).

The protein belongs to the universal ribosomal protein uL11 family. As to quaternary structure, part of the ribosomal stalk of the 50S ribosomal subunit. Interacts with L10 and the large rRNA to form the base of the stalk. L10 forms an elongated spine to which L12 dimers bind in a sequential fashion forming a multimeric L10(L12)X complex. One or more lysine residues are methylated.

In terms of biological role, forms part of the ribosomal stalk which helps the ribosome interact with GTP-bound translation factors. The protein is Large ribosomal subunit protein uL11 of Campylobacter jejuni subsp. jejuni serotype O:6 (strain 81116 / NCTC 11828).